The chain runs to 178 residues: Large ribosomal subunit protein uL6 (178 aa).

This sequence belongs to the universal ribosomal protein uL6 family. Part of the 50S ribosomal subunit.

Functionally, this protein binds to the 23S rRNA, and is important in its secondary structure. It is located near the subunit interface in the base of the L7/L12 stalk, and near the tRNA binding site of the peptidyltransferase center. This is Large ribosomal subunit protein uL6 from Maridesulfovibrio salexigens (strain ATCC 14822 / DSM 2638 / NCIMB 8403 / VKM B-1763) (Desulfovibrio salexigens).